Consider the following 245-residue polypeptide: 1-(5-phosphoribosyl)-5-[(5-phosphoribosylamino)methylideneamino] imidazole-4-carboxamide isomerase (245 aa).

Asp7 serves as the catalytic Proton acceptor. Catalysis depends on Asp129, which acts as the Proton donor.

This sequence belongs to the HisA/HisF family.

The protein resides in the cytoplasm. The catalysed reaction is 1-(5-phospho-beta-D-ribosyl)-5-[(5-phospho-beta-D-ribosylamino)methylideneamino]imidazole-4-carboxamide = 5-[(5-phospho-1-deoxy-D-ribulos-1-ylimino)methylamino]-1-(5-phospho-beta-D-ribosyl)imidazole-4-carboxamide. Its pathway is amino-acid biosynthesis; L-histidine biosynthesis; L-histidine from 5-phospho-alpha-D-ribose 1-diphosphate: step 4/9. This chain is 1-(5-phosphoribosyl)-5-[(5-phosphoribosylamino)methylideneamino] imidazole-4-carboxamide isomerase, found in Aliivibrio fischeri (strain ATCC 700601 / ES114) (Vibrio fischeri).